Consider the following 678-residue polypeptide: uncharacterized protein (678 aa).

Helical transmembrane passes span leucine 14–leucine 34 and glycine 180–phenylalanine 200.

The protein belongs to the mycobacterial PPE family.

The protein localises to the cell membrane. This is an uncharacterized protein from Mycobacterium tuberculosis (strain CDC 1551 / Oshkosh).